The following is a 246-amino-acid chain: Histone H1 (246 aa).

Disordered stretches follow at residues 1 to 51 (MATD…PTHL) and 105 to 246 (GGKL…KAKK). Low complexity predominate over residues 9–34 (PAPLVDAAPEAPADAPAAPAADANAA). Over residues 35 to 47 (KAKKATAPKKRAS) the composition is skewed to basic residues. Positions 49–119 (THLPYAEMVS…KVKNSYKLSS (71 aa)) constitute an H15 domain. Basic residues-rich tracts occupy residues 129 to 189 (AAPK…KAKP) and 198 to 208 (PLAKKAGRAKA). The segment covering 224 to 235 (KKAAPSKKAATP) has biased composition (low complexity).

It belongs to the histone H1/H5 family.

It localises to the nucleus. The protein resides in the chromosome. Histones H1 are necessary for the condensation of nucleosome chains into higher-order structures. The chain is Histone H1 from Zea mays (Maize).